A 430-amino-acid polypeptide reads, in one-letter code: 3-phosphoshikimate 1-carboxyvinyltransferase (430 aa).

Residues lysine 20, serine 21, and arginine 25 each contribute to the 3-phosphoshikimate site. Residue lysine 20 coordinates phosphoenolpyruvate. Residues glycine 90 and arginine 118 each coordinate phosphoenolpyruvate. Serine 163, serine 164, glutamine 165, serine 191, aspartate 311, and lysine 338 together coordinate 3-phosphoshikimate. Glutamine 165 is a binding site for phosphoenolpyruvate. Aspartate 311 acts as the Proton acceptor in catalysis. Residues arginine 342 and arginine 383 each coordinate phosphoenolpyruvate.

It belongs to the EPSP synthase family. As to quaternary structure, monomer.

Its subcellular location is the cytoplasm. It carries out the reaction 3-phosphoshikimate + phosphoenolpyruvate = 5-O-(1-carboxyvinyl)-3-phosphoshikimate + phosphate. The protein operates within metabolic intermediate biosynthesis; chorismate biosynthesis. Its function is as follows. Catalyzes the transfer of the enolpyruvyl moiety of phosphoenolpyruvate (PEP) to the 5-hydroxyl of shikimate-3-phosphate (S3P) to produce enolpyruvyl shikimate-3-phosphate and inorganic phosphate. This Methanosarcina mazei (strain ATCC BAA-159 / DSM 3647 / Goe1 / Go1 / JCM 11833 / OCM 88) (Methanosarcina frisia) protein is 3-phosphoshikimate 1-carboxyvinyltransferase.